The following is a 208-amino-acid chain: N-(5'-phosphoribosyl)anthranilate isomerase (208 aa).

Belongs to the TrpF family.

It catalyses the reaction N-(5-phospho-beta-D-ribosyl)anthranilate = 1-(2-carboxyphenylamino)-1-deoxy-D-ribulose 5-phosphate. Its pathway is amino-acid biosynthesis; L-tryptophan biosynthesis; L-tryptophan from chorismate: step 3/5. This chain is N-(5'-phosphoribosyl)anthranilate isomerase, found in Neisseria gonorrhoeae (strain ATCC 700825 / FA 1090).